The following is a 700-amino-acid chain: Tectonic-2 (700 aa).

A signal peptide spans 1-25; that stretch reads MGSLSPLSLLWGLLLLQGVLRPLRG. Topologically, residues 26-665 are extracellular; the sequence is DPVFIPPFIR…YYQGEPQSQC (640 aa). Asparagine 76, asparagine 82, asparagine 146, asparagine 156, and asparagine 389 each carry an N-linked (GlcNAc...) asparagine glycan. A helical membrane pass occupies residues 666–682; that stretch reads VAKGLMLLSLLMLAILL. Topologically, residues 683–700 are cytoplasmic; sequence RHPWVRMCKARDSAAIYH.

Belongs to the tectonic family. In terms of assembly, part of the tectonic-like complex (also named B9 complex). Significant expression is observed in brain, kidney and eye.

Its subcellular location is the membrane. It is found in the cytoplasm. The protein resides in the cytoskeleton. It localises to the cilium basal body. Functionally, component of the tectonic-like complex, a complex localized at the transition zone of primary cilia and acting as a barrier that prevents diffusion of transmembrane proteins between the cilia and plasma membranes. Required for hedgehog signaling transduction. In Mus musculus (Mouse), this protein is Tectonic-2 (Tctn2).